The primary structure comprises 177 residues: GTP-dependent dephospho-CoA kinase (177 aa).

7 residues coordinate GTP: D48, V49, V50, D67, K69, E124, and D147.

This sequence belongs to the GTP-dependent DPCK family.

The enzyme catalyses 3'-dephospho-CoA + GTP = GDP + CoA + H(+). It functions in the pathway cofactor biosynthesis; coenzyme A biosynthesis. In terms of biological role, catalyzes the GTP-dependent phosphorylation of the 3'-hydroxyl group of dephosphocoenzyme A to form coenzyme A (CoA). The polypeptide is GTP-dependent dephospho-CoA kinase (Thermococcus onnurineus (strain NA1)).